Consider the following 940-residue polypeptide: Isoleucine--tRNA ligase (940 aa).

Residues 58–68 (PYANGNIHIGH) carry the 'HIGH' region motif. L-isoleucyl-5'-AMP is bound at residue glutamate 563. A 'KMSKS' region motif is present at residues 604–608 (KMSKS). Position 607 (lysine 607) interacts with ATP. Cysteine 903, cysteine 906, cysteine 923, and cysteine 926 together coordinate Zn(2+).

The protein belongs to the class-I aminoacyl-tRNA synthetase family. IleS type 1 subfamily. Monomer. Requires Zn(2+) as cofactor.

Its subcellular location is the cytoplasm. The catalysed reaction is tRNA(Ile) + L-isoleucine + ATP = L-isoleucyl-tRNA(Ile) + AMP + diphosphate. Its function is as follows. Catalyzes the attachment of isoleucine to tRNA(Ile). As IleRS can inadvertently accommodate and process structurally similar amino acids such as valine, to avoid such errors it has two additional distinct tRNA(Ile)-dependent editing activities. One activity is designated as 'pretransfer' editing and involves the hydrolysis of activated Val-AMP. The other activity is designated 'posttransfer' editing and involves deacylation of mischarged Val-tRNA(Ile). This chain is Isoleucine--tRNA ligase, found in Buchnera aphidicola subsp. Acyrthosiphon pisum (strain 5A).